Consider the following 369-residue polypeptide: Peptide chain release factor 2 (369 aa).

An N5-methylglutamine modification is found at Q250.

It belongs to the prokaryotic/mitochondrial release factor family. Post-translationally, methylated by PrmC. Methylation increases the termination efficiency of RF2.

The protein localises to the cytoplasm. Peptide chain release factor 2 directs the termination of translation in response to the peptide chain termination codons UGA and UAA. The polypeptide is Peptide chain release factor 2 (prfB) (Rickettsia typhi (strain ATCC VR-144 / Wilmington)).